The chain runs to 227 residues: Cytochrome c oxidase subunit 2 (227 aa).

The Mitochondrial intermembrane portion of the chain corresponds to 1–14 (MAHPVQLSLQDATS). Residues 15–45 (PVMEELITFHDHAFMAMSLISFLVLYALLST) traverse the membrane as a helical segment. The Mitochondrial matrix segment spans residues 46–59 (LTTKLTNTSITDAQ). Residues 60–87 (EMETIWTILPAIILILIALPSLRILYLT) traverse the membrane as a helical segment. Residues 88 to 227 (DEVNDPSFTI…IFEMGPVLTL (140 aa)) lie on the Mitochondrial intermembrane side of the membrane. Cu cation-binding residues include His161, Cys196, Glu198, Cys200, His204, and Met207. Residue Glu198 participates in Mg(2+) binding.

Belongs to the cytochrome c oxidase subunit 2 family. In terms of assembly, component of the cytochrome c oxidase (complex IV, CIV), a multisubunit enzyme composed of 14 subunits. The complex is composed of a catalytic core of 3 subunits MT-CO1, MT-CO2 and MT-CO3, encoded in the mitochondrial DNA, and 11 supernumerary subunits COX4I, COX5A, COX5B, COX6A, COX6B, COX6C, COX7A, COX7B, COX7C, COX8 and NDUFA4, which are encoded in the nuclear genome. The complex exists as a monomer or a dimer and forms supercomplexes (SCs) in the inner mitochondrial membrane with NADH-ubiquinone oxidoreductase (complex I, CI) and ubiquinol-cytochrome c oxidoreductase (cytochrome b-c1 complex, complex III, CIII), resulting in different assemblies (supercomplex SCI(1)III(2)IV(1) and megacomplex MCI(2)III(2)IV(2)). Found in a complex with TMEM177, COA6, COX18, COX20, SCO1 and SCO2. Interacts with TMEM177 in a COX20-dependent manner. Interacts with COX20. Interacts with COX16. Requires Cu cation as cofactor.

The protein resides in the mitochondrion inner membrane. The catalysed reaction is 4 Fe(II)-[cytochrome c] + O2 + 8 H(+)(in) = 4 Fe(III)-[cytochrome c] + 2 H2O + 4 H(+)(out). Its function is as follows. Component of the cytochrome c oxidase, the last enzyme in the mitochondrial electron transport chain which drives oxidative phosphorylation. The respiratory chain contains 3 multisubunit complexes succinate dehydrogenase (complex II, CII), ubiquinol-cytochrome c oxidoreductase (cytochrome b-c1 complex, complex III, CIII) and cytochrome c oxidase (complex IV, CIV), that cooperate to transfer electrons derived from NADH and succinate to molecular oxygen, creating an electrochemical gradient over the inner membrane that drives transmembrane transport and the ATP synthase. Cytochrome c oxidase is the component of the respiratory chain that catalyzes the reduction of oxygen to water. Electrons originating from reduced cytochrome c in the intermembrane space (IMS) are transferred via the dinuclear copper A center (CU(A)) of subunit 2 and heme A of subunit 1 to the active site in subunit 1, a binuclear center (BNC) formed by heme A3 and copper B (CU(B)). The BNC reduces molecular oxygen to 2 water molecules using 4 electrons from cytochrome c in the IMS and 4 protons from the mitochondrial matrix. The sequence is that of Cytochrome c oxidase subunit 2 (MT-CO2) from Macaca mulatta (Rhesus macaque).